The sequence spans 451 residues: Tubulin gamma-1 chain (451 aa).

The residue at position 131 (Ser131) is a Phosphoserine; by BRSK1. 142-148 is a GTP binding site; sequence AGGTGSG.

This sequence belongs to the tubulin family. As to quaternary structure, component of the gamma-tubulin ring complex (gTuRC) consisting of TUBGCP2, TUBGCP3, TUBGCP4, TUBGCP5 and TUBGCP6 and gamma-tubulin TUBG1 or TUBG2. TUBGCP2, TUBGCP3, TUBGCP4, TUBGCP5 and TUBGCP6 assemble in a 5:5:2:1:1 stoichiometry; each is associated with a gamma-tubulin, thereby arranging 14 gamma-tubulins in a helical manner. Gamma-tubulin at the first position is blocked by TUBGCP3 at the last position, allowing 13 protafilaments to grow into a microtubule. The gTuRC (via TUBGCP3 and TUBGCP6) interacts with ACTB and MZT1; the interactions form a luminal bridge that stabilizes the initial structure during complex assembly. The gTuRC (via TUBGCP2) interacts with MZT2A/MZT2B and CDK5RAP2 (via CM1 motif); the interactions play a role in gTuRC activation. Interacts with alpha-beta tubulin heterodimers; the interaction allows microtubules to nucleate from the gTuRC. Interacts with B9D2. Interacts with CDK5RAP2; the interaction is leading to centrosomal localization of TUBG1 and CDK5RAP2. Interacts with CIMAP3. Interacts with SAS6 and NUP62 at the centrosome. Interacts with EML3 (phosphorylated at 'Thr-881') and HAUS8. Interacts with DNM2; this interaction may participate in centrosome cohesion. Interacts with CCDC66. Post-translationally, phosphorylation at Ser-131 by BRSK1 regulates centrosome duplication, possibly by mediating relocation of gamma-tubulin and its associated proteins from the cytoplasm to the centrosome.

It is found in the cytoplasm. It localises to the cytoskeleton. The protein resides in the microtubule organizing center. Its subcellular location is the centrosome. The protein localises to the spindle. Tubulin is the major constituent of microtubules, protein filaments consisting of alpha- and beta-tubulin heterodimers. Gamma-tubulin is a key component of the gamma-tubulin ring complex (gTuRC) which mediates microtubule nucleation. The gTuRC regulates the minus-end nucleation of alpha-beta tubulin heterodimers that grow into microtubule protafilaments, a critical step in centrosome duplication and spindle formation. In Bos taurus (Bovine), this protein is Tubulin gamma-1 chain.